The following is a 240-amino-acid chain: Ribosomal RNA small subunit methyltransferase J (240 aa).

Residues 93-94 (RD) and Asp162 each bind S-adenosyl-L-methionine.

This sequence belongs to the methyltransferase superfamily. RsmJ family.

The protein resides in the cytoplasm. The catalysed reaction is guanosine(1516) in 16S rRNA + S-adenosyl-L-methionine = N(2)-methylguanosine(1516) in 16S rRNA + S-adenosyl-L-homocysteine + H(+). In terms of biological role, specifically methylates the guanosine in position 1516 of 16S rRNA. This chain is Ribosomal RNA small subunit methyltransferase J, found in Francisella philomiragia subsp. philomiragia (strain ATCC 25017 / CCUG 19701 / FSC 153 / O#319-036).